The following is a 180-amino-acid chain: MSELSIYSEQGGEPVFSTLDSARIQHELSLRGIAFDRCASKAEIALDADQADILSTYAEEIHRIQALGDYPTVDAIRMKPDHPDRQALRQKFLSEHTHAEDEVRLFVEGRGLFCLHIKSEVLQVTCETNDWISVPAGTRHWFDMGEKPYFCAIRFFNNPNGWVANFTNDPIAERFSKLRD.

Positions 96, 98, 102, and 140 each coordinate Fe(2+). Residues histidine 96, histidine 98, glutamate 102, and histidine 140 each contribute to the Ni(2+) site.

This sequence belongs to the acireductone dioxygenase (ARD) family. Monomer. Fe(2+) serves as cofactor. It depends on Ni(2+) as a cofactor.

The catalysed reaction is 1,2-dihydroxy-5-(methylsulfanyl)pent-1-en-3-one + O2 = 3-(methylsulfanyl)propanoate + CO + formate + 2 H(+). It catalyses the reaction 1,2-dihydroxy-5-(methylsulfanyl)pent-1-en-3-one + O2 = 4-methylsulfanyl-2-oxobutanoate + formate + 2 H(+). The protein operates within amino-acid biosynthesis; L-methionine biosynthesis via salvage pathway; L-methionine from S-methyl-5-thio-alpha-D-ribose 1-phosphate: step 5/6. In terms of biological role, catalyzes 2 different reactions between oxygen and the acireductone 1,2-dihydroxy-3-keto-5-methylthiopentene (DHK-MTPene) depending upon the metal bound in the active site. Fe-containing acireductone dioxygenase (Fe-ARD) produces formate and 2-keto-4-methylthiobutyrate (KMTB), the alpha-ketoacid precursor of methionine in the methionine recycle pathway. Ni-containing acireductone dioxygenase (Ni-ARD) produces methylthiopropionate, carbon monoxide and formate, and does not lie on the methionine recycle pathway. The chain is Acireductone dioxygenase from Synechococcus sp. (strain WH7803).